A 537-amino-acid polypeptide reads, in one-letter code: Syncytin-2 (537 aa).

The first 15 residues, 1–15, serve as a signal peptide directing secretion; that stretch reads MGLLLLVLILTPLLA. Topologically, residues 16–478 are extracellular; that stretch reads AYRHPDFPLL…GWLNWEGTWK (463 aa). The short motif at 43–46 is the CXXC element; sequence CWLC. Cystine bridges form between C43–C46, C43–C439, and C431–C438. 8 N-linked (GlcNAc...) asparagine glycosylation sites follow: N133, N146, N177, N220, N241, N247, N312, and N332. A fusion peptide region spans residues 354–374; the sequence is FIPLLAGLGILAGTGTGIAGI. Residues 414–430 carry the CKS-17 motif; sequence LQNRRGLDMLTAAQGGI. The short motif at 431–439 is the CX6CC element; that stretch reads CLALDEKCC. N443 is a glycosylation site (N-linked (GlcNAc...) asparagine). A helical membrane pass occupies residues 479 to 499; the sequence is WFSWVLPFIGPLVSLLLLLLF. At 500 to 537 the chain is on the cytoplasmic side; that stretch reads GPCLLNLITQFVSSRLQAIKLQTNGAGCRPRNIQESPF.

Belongs to the gamma type-C retroviral envelope protein family. HERV class-I FRD env subfamily. The surface and transmembrane proteins form a heterodimer. They are attached by non-covalent interactions or by a labile interchain disulfide bond. In terms of processing, specific enzymatic cleavages in vivo yield the mature SU and TM proteins. The CXXC motif is highly conserved across a broad range of retroviral envelope proteins. It is thought to participate in the formation of a labile disulfide bond possibly with the CX6CC motif present in the transmembrane protein.

The protein resides in the virion. It is found in the cell membrane. This endogenous retroviral envelope protein has retained its original fusogenic properties and participates in trophoblast fusion and the formation of a syncytium during placenta morphogenesis. The interaction with MFSD2A is apparently important for this process. Its function is as follows. Endogenous envelope proteins may have kept, lost or modified their original function during evolution but this one can still make pseudotypes with MLV, HIV-1 or SIV-1 virions and confer infectivity. Retroviral envelope proteins mediate receptor recognition and membrane fusion during early infection. The surface protein mediates receptor recognition, while the transmembrane protein anchors the envelope heterodimer to the viral membrane through one transmembrane domain. The other hydrophobic domain, called fusion peptide, mediates fusion of the viral membrane with the target cell membrane. The protein is Syncytin-2 (ERVFRD-1) of Macaca fascicularis (Crab-eating macaque).